Reading from the N-terminus, the 284-residue chain is L-ribulose-5-phosphate 3-epimerase UlaE (284 aa).

Belongs to the L-ribulose-5-phosphate 3-epimerase family.

It catalyses the reaction L-ribulose 5-phosphate = L-xylulose 5-phosphate. It functions in the pathway cofactor degradation; L-ascorbate degradation; D-xylulose 5-phosphate from L-ascorbate: step 3/4. Its function is as follows. Catalyzes the isomerization of L-xylulose-5-phosphate to L-ribulose-5-phosphate. Is involved in the anaerobic L-ascorbate utilization. The chain is L-ribulose-5-phosphate 3-epimerase UlaE from Shigella flexneri serotype 5b (strain 8401).